Reading from the N-terminus, the 471-residue chain is Amidophosphoribosyltransferase (471 aa).

Residue C2 is the Nucleophile of the active site. The 223-residue stretch at 2–224 folds into the Glutamine amidotransferase type-2 domain; that stretch reads CGIFGIYSYE…PGEIIEIKDG (223 aa). Residue C255 participates in [4Fe-4S] cluster binding. Mg(2+) is bound by residues S302, D364, and D365. Residues C401, C450, and C453 each coordinate [4Fe-4S] cluster.

It in the C-terminal section; belongs to the purine/pyrimidine phosphoribosyltransferase family. It depends on Mg(2+) as a cofactor. The cofactor is [4Fe-4S] cluster.

It catalyses the reaction 5-phospho-beta-D-ribosylamine + L-glutamate + diphosphate = 5-phospho-alpha-D-ribose 1-diphosphate + L-glutamine + H2O. The protein operates within purine metabolism; IMP biosynthesis via de novo pathway; N(1)-(5-phospho-D-ribosyl)glycinamide from 5-phospho-alpha-D-ribose 1-diphosphate: step 1/2. Its function is as follows. Catalyzes the formation of phosphoribosylamine from phosphoribosylpyrophosphate (PRPP) and glutamine. In Methanocaldococcus jannaschii (strain ATCC 43067 / DSM 2661 / JAL-1 / JCM 10045 / NBRC 100440) (Methanococcus jannaschii), this protein is Amidophosphoribosyltransferase.